The primary structure comprises 161 residues: FAD synthase (161 aa).

Residues 19 to 20 (TF), 24 to 27 (HPGH), D106, and Y133 contribute to the ATP site.

This sequence belongs to the archaeal FAD synthase family. As to quaternary structure, homodimer. The cofactor is a divalent metal cation.

It catalyses the reaction FMN + ATP + H(+) = FAD + diphosphate. It participates in cofactor biosynthesis; FAD biosynthesis; FAD from FMN: step 1/1. Catalyzes the transfer of the AMP portion of ATP to flavin mononucleotide (FMN) to produce flavin adenine dinucleotide (FAD) coenzyme. This Methanothermobacter marburgensis (strain ATCC BAA-927 / DSM 2133 / JCM 14651 / NBRC 100331 / OCM 82 / Marburg) (Methanobacterium thermoautotrophicum) protein is FAD synthase.